A 491-amino-acid chain; its full sequence is Cyclin-B1-5 (491 aa).

The region spanning 275 to 347 (DMYSFYKEVE…VKAVPKRELQ (73 aa)) is the Cyclin N-terminal domain.

It belongs to the cyclin family. Cyclin AB subfamily. As to expression, expressed in roots, stems and flowers.

In Arabidopsis thaliana (Mouse-ear cress), this protein is Cyclin-B1-5 (CYCB1-5).